Here is a 182-residue protein sequence, read N- to C-terminus: Protein Syd (182 aa).

This sequence belongs to the Syd family.

Its subcellular location is the cell inner membrane. Interacts with the SecY protein in vivo. May bind preferentially to an uncomplexed state of SecY, thus functioning either as a chelating agent for excess SecY in the cell or as a regulatory factor that negatively controls the translocase function. The chain is Protein Syd from Pectobacterium atrosepticum (strain SCRI 1043 / ATCC BAA-672) (Erwinia carotovora subsp. atroseptica).